Here is a 298-residue protein sequence, read N- to C-terminus: tRNA dimethylallyltransferase (298 aa).

12 to 19 (GPTASGKT) lines the ATP pocket. 14–19 (TASGKT) contacts substrate. Positions 37-40 (DSRQ) are interaction with substrate tRNA.

This sequence belongs to the IPP transferase family. In terms of assembly, monomer. The cofactor is Mg(2+).

The enzyme catalyses adenosine(37) in tRNA + dimethylallyl diphosphate = N(6)-dimethylallyladenosine(37) in tRNA + diphosphate. Catalyzes the transfer of a dimethylallyl group onto the adenine at position 37 in tRNAs that read codons beginning with uridine, leading to the formation of N6-(dimethylallyl)adenosine (i(6)A). This chain is tRNA dimethylallyltransferase, found in Synechococcus sp. (strain CC9902).